The primary structure comprises 141 residues: Putative pre-16S rRNA nuclease (141 aa).

This sequence belongs to the YqgF nuclease family.

The protein resides in the cytoplasm. Its function is as follows. Could be a nuclease involved in processing of the 5'-end of pre-16S rRNA. The polypeptide is Putative pre-16S rRNA nuclease (Cupriavidus pinatubonensis (strain JMP 134 / LMG 1197) (Cupriavidus necator (strain JMP 134))).